The primary structure comprises 488 residues: TOX high mobility group box family member 2 (488 aa).

Positions 76-114 (YEIPPITPPNLPEPSLLHLGDHEASYHSLCHGLTPNGLL) are required for transcriptional activation. Disordered regions lie at residues 192 to 258 (RSSI…PQKP), 293 to 328 (WDSL…KQPM), and 363 to 473 (SLLP…ECGI). Residues 204–216 (GSKSATPSPSSST) show a composition bias toward low complexity. The segment covering 222-239 (EVHFKISGEKRPSADPGK) has biased composition (basic and acidic residues). Positions 223-252 (VHFKISGEKRPSADPGKKAKNPKKKKKKDP) match the Nuclear localization signal motif. Over residues 240–250 (KAKNPKKKKKK) the composition is skewed to basic residues. The segment at residues 255–323 (PQKPVSAYAL…QANPPAKMLP (69 aa)) is a DNA-binding region (HMG box). A compositionally biased stretch (polar residues) spans 302 to 316 (QSSPDQGETKSTQAN). Residues 443–460 (PSSSGSCSPGPSNPTSSG) are compositionally biased toward low complexity.

It localises to the nucleus. Putative transcriptional activator involved in the hypothalamo-pituitary-gonadal system. This Homo sapiens (Human) protein is TOX high mobility group box family member 2 (TOX2).